The primary structure comprises 38 residues: Large ribosomal subunit protein bL36 (38 aa).

The protein belongs to the bacterial ribosomal protein bL36 family.

In Buchnera aphidicola subsp. Acyrthosiphon pisum (strain 5A), this protein is Large ribosomal subunit protein bL36.